The chain runs to 83 residues: Cytochrome b559 subunit alpha (83 aa).

Residues 21 to 35 (VIHSITIPSLFIAGW) form a helical membrane-spanning segment. Residue H23 coordinates heme.

The protein belongs to the PsbE/PsbF family. As to quaternary structure, heterodimer of an alpha subunit and a beta subunit. PSII is composed of 1 copy each of membrane proteins PsbA, PsbB, PsbC, PsbD, PsbE, PsbF, PsbH, PsbI, PsbJ, PsbK, PsbL, PsbM, PsbT, PsbX, PsbY, PsbZ, Psb30/Ycf12, at least 3 peripheral proteins of the oxygen-evolving complex and a large number of cofactors. It forms dimeric complexes. It depends on heme b as a cofactor.

Its subcellular location is the plastid membrane. In terms of biological role, this b-type cytochrome is tightly associated with the reaction center of photosystem II (PSII). PSII is a light-driven water:plastoquinone oxidoreductase that uses light energy to abstract electrons from H(2)O, generating O(2) and a proton gradient subsequently used for ATP formation. It consists of a core antenna complex that captures photons, and an electron transfer chain that converts photonic excitation into a charge separation. This Cuscuta reflexa (Southern Asian dodder) protein is Cytochrome b559 subunit alpha.